The sequence spans 323 residues: o-succinylbenzoate synthase (323 aa).

Lys134 functions as the Proton donor in the catalytic mechanism. Mg(2+) contacts are provided by Asp162, Glu191, and Asp214. Lys236 functions as the Proton acceptor in the catalytic mechanism.

It belongs to the mandelate racemase/muconate lactonizing enzyme family. MenC type 1 subfamily. A divalent metal cation serves as cofactor.

It catalyses the reaction (1R,6R)-6-hydroxy-2-succinyl-cyclohexa-2,4-diene-1-carboxylate = 2-succinylbenzoate + H2O. Its pathway is quinol/quinone metabolism; 1,4-dihydroxy-2-naphthoate biosynthesis; 1,4-dihydroxy-2-naphthoate from chorismate: step 4/7. It participates in quinol/quinone metabolism; menaquinone biosynthesis. Converts 2-succinyl-6-hydroxy-2,4-cyclohexadiene-1-carboxylate (SHCHC) to 2-succinylbenzoate (OSB). The chain is o-succinylbenzoate synthase from Yersinia pseudotuberculosis serotype I (strain IP32953).